Here is a 212-residue protein sequence, read N- to C-terminus: Ribosomal RNA small subunit methyltransferase G (212 aa).

S-adenosyl-L-methionine-binding positions include Gly-72, Leu-77, 123–124, and Arg-138; that span reads VE.

This sequence belongs to the methyltransferase superfamily. RNA methyltransferase RsmG family.

The protein resides in the cytoplasm. The catalysed reaction is guanosine(527) in 16S rRNA + S-adenosyl-L-methionine = N(7)-methylguanosine(527) in 16S rRNA + S-adenosyl-L-homocysteine. Functionally, specifically methylates the N7 position of guanine in position 527 of 16S rRNA. The protein is Ribosomal RNA small subunit methyltransferase G of Histophilus somni (strain 2336) (Haemophilus somnus).